Reading from the N-terminus, the 89-residue chain is Small ribosomal subunit protein uS17 (89 aa).

This sequence belongs to the universal ribosomal protein uS17 family. As to quaternary structure, part of the 30S ribosomal subunit.

One of the primary rRNA binding proteins, it binds specifically to the 5'-end of 16S ribosomal RNA. The chain is Small ribosomal subunit protein uS17 from Ralstonia nicotianae (strain ATCC BAA-1114 / GMI1000) (Ralstonia solanacearum).